Consider the following 200-residue polypeptide: TATA-box-binding protein 2 (200 aa).

2 tandem repeats follow at residues 25–101 (LQNI…ARIV) and 115–192 (IQNI…YPVL).

Belongs to the TBP family. In terms of assembly, belongs to the TFIID complex together with the TBP-associated factors (TAFs). Binds DNA as monomer. Interacts with TAF1 (via N-terminus). Interacts with TFIIB1. Interacts with PTF2. Interacts with HAT5/ATHB-1 and ATHB-7. Component of a nuclear protein complex containing at least TATA binding proteins (TBPs, e.g. TBP1 and TBP2) and ATX1.

The protein resides in the nucleus. General transcription factor (GTF) that functions at the core of the DNA-binding multiprotein factor TFIID. Binding of TFIID to the TATA box is the initial transcriptional step of the pre-initiation complex (PIC), playing a role in the activation of eukaryotic genes transcribed by RNA polymerase II. Interacts with TFIIB1 and is required for activated transcription and possibly basal transcription. May act as GTF of RNA polymerase I-dependent transcription and rRNA synthesis. Forms a ternary complex with PBRP1 and the rDNA promoter region. In Arabidopsis thaliana (Mouse-ear cress), this protein is TATA-box-binding protein 2.